The following is a 121-amino-acid chain: Phosphoribosyl-AMP cyclohydrolase (121 aa).

Asp74 is a Mg(2+) binding site. Cys75 contacts Zn(2+). Mg(2+) contacts are provided by Asp76 and Asp78. Positions 91 and 98 each coordinate Zn(2+).

The protein belongs to the PRA-CH family. In terms of assembly, homodimer. Requires Mg(2+) as cofactor. Zn(2+) serves as cofactor.

Its subcellular location is the cytoplasm. The enzyme catalyses 1-(5-phospho-beta-D-ribosyl)-5'-AMP + H2O = 1-(5-phospho-beta-D-ribosyl)-5-[(5-phospho-beta-D-ribosylamino)methylideneamino]imidazole-4-carboxamide. The protein operates within amino-acid biosynthesis; L-histidine biosynthesis; L-histidine from 5-phospho-alpha-D-ribose 1-diphosphate: step 3/9. Its function is as follows. Catalyzes the hydrolysis of the adenine ring of phosphoribosyl-AMP. This Methanothrix thermoacetophila (strain DSM 6194 / JCM 14653 / NBRC 101360 / PT) (Methanosaeta thermophila) protein is Phosphoribosyl-AMP cyclohydrolase.